The sequence spans 332 residues: Biotin synthase (332 aa).

In terms of domain architecture, Radical SAM core spans 53-282 (HFGKKVKLNM…TKEIRISGGR (230 aa)). [4Fe-4S] cluster is bound by residues C71, C75, and C78. 4 residues coordinate [2Fe-2S] cluster: C115, C147, C207, and R277.

Belongs to the radical SAM superfamily. Biotin synthase family. As to quaternary structure, homodimer. It depends on [4Fe-4S] cluster as a cofactor. [2Fe-2S] cluster is required as a cofactor.

The enzyme catalyses (4R,5S)-dethiobiotin + (sulfur carrier)-SH + 2 reduced [2Fe-2S]-[ferredoxin] + 2 S-adenosyl-L-methionine = (sulfur carrier)-H + biotin + 2 5'-deoxyadenosine + 2 L-methionine + 2 oxidized [2Fe-2S]-[ferredoxin]. The protein operates within cofactor biosynthesis; biotin biosynthesis; biotin from 7,8-diaminononanoate: step 2/2. Catalyzes the conversion of dethiobiotin (DTB) to biotin by the insertion of a sulfur atom into dethiobiotin via a radical-based mechanism. The polypeptide is Biotin synthase (Bacillus cereus (strain B4264)).